Consider the following 261-residue polypeptide: Cytochrome c oxidase subunit 3 (261 aa).

At 1 to 15 (MTHQTHAYHMVNPSP) the chain is on the mitochondrial matrix side. A helical transmembrane segment spans residues 16–34 (WPLTGALSALLMTSGLTMW). Over 35-40 (FHYNST) the chain is Mitochondrial intermembrane. The helical transmembrane segment at 41-66 (ILLMLGLTTNMLTMYQWWRDIIREST) threads the bilayer. The Mitochondrial matrix portion of the chain corresponds to 67–72 (FQGHHT). Residues 73–105 (PTVQKGLRYGMILFIISEVLFFTGFFWAFYHSS) traverse the membrane as a helical segment. The Mitochondrial intermembrane portion of the chain corresponds to 106-128 (LAPTPELGGCWPPTGIHPLNPLE). A helical transmembrane segment spans residues 129–152 (VPLLNTSVLLASGVSITWAHHSLM). Over 153 to 155 (EGD) the chain is Mitochondrial matrix. Residues 156 to 183 (RNHMLQALFITIALGIYFTLLQASEYYE) traverse the membrane as a helical segment. At 184–190 (APFTISD) the chain is on the mitochondrial intermembrane side. A helical membrane pass occupies residues 191–223 (GVYGSTFFVATGFHGLHVIIGSTFLIVCFFRQL). At 224-232 (KFHFTSSHH) the chain is on the mitochondrial matrix side. A helical transmembrane segment spans residues 233 to 256 (FGFEAAAWYWHFVDVVWLFLYVSI). Residues 257–261 (YWWGS) are Mitochondrial intermembrane-facing.

It belongs to the cytochrome c oxidase subunit 3 family. In terms of assembly, component of the cytochrome c oxidase (complex IV, CIV), a multisubunit enzyme composed of 14 subunits. The complex is composed of a catalytic core of 3 subunits MT-CO1, MT-CO2 and MT-CO3, encoded in the mitochondrial DNA, and 11 supernumerary subunits COX4I, COX5A, COX5B, COX6A, COX6B, COX6C, COX7A, COX7B, COX7C, COX8 and NDUFA4, which are encoded in the nuclear genome. The complex exists as a monomer or a dimer and forms supercomplexes (SCs) in the inner mitochondrial membrane with NADH-ubiquinone oxidoreductase (complex I, CI) and ubiquinol-cytochrome c oxidoreductase (cytochrome b-c1 complex, complex III, CIII), resulting in different assemblies (supercomplex SCI(1)III(2)IV(1) and megacomplex MCI(2)III(2)IV(2)).

It localises to the mitochondrion inner membrane. It carries out the reaction 4 Fe(II)-[cytochrome c] + O2 + 8 H(+)(in) = 4 Fe(III)-[cytochrome c] + 2 H2O + 4 H(+)(out). In terms of biological role, component of the cytochrome c oxidase, the last enzyme in the mitochondrial electron transport chain which drives oxidative phosphorylation. The respiratory chain contains 3 multisubunit complexes succinate dehydrogenase (complex II, CII), ubiquinol-cytochrome c oxidoreductase (cytochrome b-c1 complex, complex III, CIII) and cytochrome c oxidase (complex IV, CIV), that cooperate to transfer electrons derived from NADH and succinate to molecular oxygen, creating an electrochemical gradient over the inner membrane that drives transmembrane transport and the ATP synthase. Cytochrome c oxidase is the component of the respiratory chain that catalyzes the reduction of oxygen to water. Electrons originating from reduced cytochrome c in the intermembrane space (IMS) are transferred via the dinuclear copper A center (CU(A)) of subunit 2 and heme A of subunit 1 to the active site in subunit 1, a binuclear center (BNC) formed by heme A3 and copper B (CU(B)). The BNC reduces molecular oxygen to 2 water molecules using 4 electrons from cytochrome c in the IMS and 4 protons from the mitochondrial matrix. The protein is Cytochrome c oxidase subunit 3 (MT-CO3) of Tragelaphus imberbis (Lesser kudu).